Here is a 77-residue protein sequence, read N- to C-terminus: Large ribosomal subunit protein uL24 (77 aa).

Belongs to the universal ribosomal protein uL24 family. As to quaternary structure, part of the 50S ribosomal subunit.

One of two assembly initiator proteins, it binds directly to the 5'-end of the 23S rRNA, where it nucleates assembly of the 50S subunit. Functionally, one of the proteins that surrounds the polypeptide exit tunnel on the outside of the subunit. This chain is Large ribosomal subunit protein uL24, found in Campylobacter jejuni subsp. doylei (strain ATCC BAA-1458 / RM4099 / 269.97).